The chain runs to 24 residues: 60 kDa chaperonin, mitochondrial (24 aa).

Belongs to the chaperonin (HSP60) family. Forms a single seven-member ring complex, in tight association with the p63 protein. As to expression, testis.

Its subcellular location is the mitochondrion. Functionally, implicated in mitochondrial protein import and macromolecular assembly. May facilitate the correct folding of imported proteins. May also prevent misfolding and promote the refolding and proper assembly of unfolded polypeptides generated under stress conditions in the mitochondrial matrix. The chain is 60 kDa chaperonin, mitochondrial from Heliothis virescens (Tobacco budworm moth).